Here is a 117-residue protein sequence, read N- to C-terminus: Large ribosomal subunit protein uL22 (117 aa).

It belongs to the universal ribosomal protein uL22 family. Part of the 50S ribosomal subunit.

Functionally, this protein binds specifically to 23S rRNA; its binding is stimulated by other ribosomal proteins, e.g. L4, L17, and L20. It is important during the early stages of 50S assembly. It makes multiple contacts with different domains of the 23S rRNA in the assembled 50S subunit and ribosome. Its function is as follows. The globular domain of the protein is located near the polypeptide exit tunnel on the outside of the subunit, while an extended beta-hairpin is found that lines the wall of the exit tunnel in the center of the 70S ribosome. The chain is Large ribosomal subunit protein uL22 from Latilactobacillus sakei subsp. sakei (strain 23K) (Lactobacillus sakei subsp. sakei).